A 515-amino-acid chain; its full sequence is Na(+)/H(+) antiporter NhaB (515 aa).

The next 13 membrane-spanning stretches (helical) occupy residues 23 to 43, 44 to 64, 88 to 108, 119 to 139, 143 to 163, 202 to 222, 238 to 258, 303 to 323, 324 to 344, 357 to 377, 389 to 409, 447 to 467, and 477 to 497; these read IIVF…FIAG, WCLV…YPLQ, IMAS…IYFM, LLIT…SAAF, FLDA…FYGV, LMMH…VGEP, FFIR…ITCV, GIIG…VGLI, GLSV…STIG, LVVF…GPII, LLLF…VFVA, ATPN…APLI, and MALP…EYIL.

The protein belongs to the NhaB Na(+)/H(+) (TC 2.A.34) antiporter family.

The protein resides in the cell inner membrane. It carries out the reaction 2 Na(+)(in) + 3 H(+)(out) = 2 Na(+)(out) + 3 H(+)(in). Na(+)/H(+) antiporter that extrudes sodium in exchange for external protons. The sequence is that of Na(+)/H(+) antiporter NhaB from Mannheimia succiniciproducens (strain KCTC 0769BP / MBEL55E).